The sequence spans 215 residues: Tail hub protein A (215 aa).

As to quaternary structure, heterotrimer with THB. The heterotrimers further assemble as 12 docking hubs that anchor the trimeric tail fibers.

It is found in the virion. Its function is as follows. Forms the tail hub together with tail hub protein B (THB). In Bacteroides phage crAss001 (Bacteroides phage PhiCrAss001), this protein is Tail hub protein A.